The following is a 92-amino-acid chain: Small ribosomal subunit protein uS19c (92 aa).

It belongs to the universal ribosomal protein uS19 family.

The protein localises to the plastid. The protein resides in the chloroplast. Functionally, protein S19 forms a complex with S13 that binds strongly to the 16S ribosomal RNA. The protein is Small ribosomal subunit protein uS19c of Lobularia maritima (Sweet alyssum).